Here is a 237-residue protein sequence, read N- to C-terminus: Necrosis-inducing protein NPP1 (237 aa).

The first 19 residues, 1–19 (MNVLTFLIAAAVSLAVVQA), serve as a signal peptide directing secretion. N-linked (GlcNAc...) asparagine glycosylation occurs at Asn-67. The short motif at 103-113 (AIMYSWYFPKD) is the Conserved undecapeptide motif element. The Conserved heptapetpide motif motif lies at 120–126 (GHRHDWE).

This sequence belongs to the Necrosis inducing protein (NPP1) family.

The protein localises to the secreted. In terms of biological role, secreted effector that acts as a pathogen-associated molecular pattern (PAMP) recognized by the plant immune system. Induces necrotic cell death and ethylene biosynthesis in parsley. Stimulates early induced host cellular responses implicated in elicitor signal transmission such as increased levels of cytoplasmic calcium, production of reactive oxygen species (ROS), and MAP kinase activation. Infiltration of NPP1 into leaves of Arabidopsis thaliana results in transcript accumulation of pathogenesis-related (PR) genes, production of ROS and ethylene, callose apposition, and hypersensitive response (HR)-like cell death. NPP1-mediated induction of the PR1 gene is salicylic acid-dependent, and requires both functional NDR1 and PAD4. The sequence is that of Necrosis-inducing protein NPP1 from Phytophthora nicotianae (Potato buckeye rot agent).